The following is a 452-amino-acid chain: Bifunctional protein GlmU (452 aa).

Residues 1 to 224 (MNIVILAAGM…VWETHGVNSK (224 aa)) are pyrophosphorylase. Residues 6-9 (LAAG), Lys20, Gln71, 76-77 (GT), 98-100 (YGD), Gly135, Glu149, Asn164, and Asn222 each bind UDP-N-acetyl-alpha-D-glucosamine. Residue Asp100 coordinates Mg(2+). Mg(2+) is bound at residue Asn222. A linker region spans residues 225–245 (VQLAELERVHQNNIARALLEH). An N-acetyltransferase region spans residues 246-452 (GVTLADPARI…GWQRPVKIKK (207 aa)). Residues Arg328 and Lys346 each contribute to the UDP-N-acetyl-alpha-D-glucosamine site. Residue His358 is the Proton acceptor of the active site. UDP-N-acetyl-alpha-D-glucosamine is bound by residues Tyr361 and Asn372. Acetyl-CoA is bound by residues Ala375, 381-382 (NY), Ser400, Ala418, and Arg435.

This sequence in the N-terminal section; belongs to the N-acetylglucosamine-1-phosphate uridyltransferase family. It in the C-terminal section; belongs to the transferase hexapeptide repeat family. Homotrimer. Requires Mg(2+) as cofactor.

The protein resides in the cytoplasm. It carries out the reaction alpha-D-glucosamine 1-phosphate + acetyl-CoA = N-acetyl-alpha-D-glucosamine 1-phosphate + CoA + H(+). It catalyses the reaction N-acetyl-alpha-D-glucosamine 1-phosphate + UTP + H(+) = UDP-N-acetyl-alpha-D-glucosamine + diphosphate. Its pathway is nucleotide-sugar biosynthesis; UDP-N-acetyl-alpha-D-glucosamine biosynthesis; N-acetyl-alpha-D-glucosamine 1-phosphate from alpha-D-glucosamine 6-phosphate (route II): step 2/2. It functions in the pathway nucleotide-sugar biosynthesis; UDP-N-acetyl-alpha-D-glucosamine biosynthesis; UDP-N-acetyl-alpha-D-glucosamine from N-acetyl-alpha-D-glucosamine 1-phosphate: step 1/1. The protein operates within bacterial outer membrane biogenesis; LPS lipid A biosynthesis. Catalyzes the last two sequential reactions in the de novo biosynthetic pathway for UDP-N-acetylglucosamine (UDP-GlcNAc). The C-terminal domain catalyzes the transfer of acetyl group from acetyl coenzyme A to glucosamine-1-phosphate (GlcN-1-P) to produce N-acetylglucosamine-1-phosphate (GlcNAc-1-P), which is converted into UDP-GlcNAc by the transfer of uridine 5-monophosphate (from uridine 5-triphosphate), a reaction catalyzed by the N-terminal domain. In Herminiimonas arsenicoxydans, this protein is Bifunctional protein GlmU.